Here is a 131-residue protein sequence, read N- to C-terminus: Lysozyme C (131 aa).

In terms of domain architecture, C-type lysozyme spans 2 to 131 (KIYEQCELAR…VSQWIKGCKL (130 aa)). 4 disulfides stabilise this stretch: C7/C129, C31/C117, C66/C82, and C78/C96. Active-site residues include E36 and D54.

The protein belongs to the glycosyl hydrolase 22 family. In terms of assembly, monomer.

Its subcellular location is the secreted. It catalyses the reaction Hydrolysis of (1-&gt;4)-beta-linkages between N-acetylmuramic acid and N-acetyl-D-glucosamine residues in a peptidoglycan and between N-acetyl-D-glucosamine residues in chitodextrins.. In terms of biological role, lysozymes have primarily a bacteriolytic function; those in tissues and body fluids are associated with the monocyte-macrophage system and enhance the activity of immunoagents. Has strong bacteriolytic activity against M.luteus and V.cholerae, weak bacteriolytic activity against P.aeruginosa and no activity against A.hydrophila. This Pelodiscus sinensis (Chinese softshell turtle) protein is Lysozyme C (LYZ).